A 282-amino-acid polypeptide reads, in one-letter code: Bifunctional protein FolD (282 aa).

Residues 166–168 and serine 191 contribute to the NADP(+) site; that span reads GRS.

It belongs to the tetrahydrofolate dehydrogenase/cyclohydrolase family. In terms of assembly, homodimer.

It catalyses the reaction (6R)-5,10-methylene-5,6,7,8-tetrahydrofolate + NADP(+) = (6R)-5,10-methenyltetrahydrofolate + NADPH. It carries out the reaction (6R)-5,10-methenyltetrahydrofolate + H2O = (6R)-10-formyltetrahydrofolate + H(+). The protein operates within one-carbon metabolism; tetrahydrofolate interconversion. In terms of biological role, catalyzes the oxidation of 5,10-methylenetetrahydrofolate to 5,10-methenyltetrahydrofolate and then the hydrolysis of 5,10-methenyltetrahydrofolate to 10-formyltetrahydrofolate. This Acidovorax sp. (strain JS42) protein is Bifunctional protein FolD.